Here is a 195-residue protein sequence, read N- to C-terminus: Imidazoleglycerol-phosphate dehydratase (195 aa).

It belongs to the imidazoleglycerol-phosphate dehydratase family.

Its subcellular location is the cytoplasm. It catalyses the reaction D-erythro-1-(imidazol-4-yl)glycerol 3-phosphate = 3-(imidazol-4-yl)-2-oxopropyl phosphate + H2O. The protein operates within amino-acid biosynthesis; L-histidine biosynthesis; L-histidine from 5-phospho-alpha-D-ribose 1-diphosphate: step 6/9. The protein is Imidazoleglycerol-phosphate dehydratase of Nitrosomonas eutropha (strain DSM 101675 / C91 / Nm57).